A 767-amino-acid polypeptide reads, in one-letter code: 5-methyltetrahydropteroyltriglutamate--homocysteine methyltransferase (767 aa).

K126 provides a ligand contact to 5-methyltetrahydropteroyltri-L-glutamate. Residues 445-447 and E498 contribute to the L-homocysteine site; that span reads IGS. L-methionine is bound by residues 445–447 and E498; that span reads IGS. Residues 529–530 and W575 each bind 5-methyltetrahydropteroyltri-L-glutamate; that span reads RC. D613 is a binding site for L-homocysteine. D613 is a binding site for L-methionine. Residue E619 participates in 5-methyltetrahydropteroyltri-L-glutamate binding. H655, C657, and E679 together coordinate Zn(2+). H708 serves as the catalytic Proton donor. A Zn(2+)-binding site is contributed by C740.

It belongs to the vitamin-B12 independent methionine synthase family. It depends on Zn(2+) as a cofactor.

It carries out the reaction 5-methyltetrahydropteroyltri-L-glutamate + L-homocysteine = tetrahydropteroyltri-L-glutamate + L-methionine. It functions in the pathway amino-acid biosynthesis; L-methionine biosynthesis via de novo pathway; L-methionine from L-homocysteine (MetE route): step 1/1. Catalyzes the transfer of a methyl group from 5-methyltetrahydrofolate to homocysteine resulting in methionine formation. This is 5-methyltetrahydropteroyltriglutamate--homocysteine methyltransferase from Psychromonas ingrahamii (strain DSM 17664 / CCUG 51855 / 37).